Here is a 365-residue protein sequence, read N- to C-terminus: 3-dehydroquinate synthase (365 aa).

NAD(+) is bound by residues 107 to 111 (GVIGD), 131 to 132 (TS), K144, and K153. The Zn(2+) site is built by E186, H251, and H268.

Belongs to the sugar phosphate cyclases superfamily. Dehydroquinate synthase family. It depends on Co(2+) as a cofactor. Zn(2+) serves as cofactor. The cofactor is NAD(+).

It is found in the cytoplasm. The catalysed reaction is 7-phospho-2-dehydro-3-deoxy-D-arabino-heptonate = 3-dehydroquinate + phosphate. It participates in metabolic intermediate biosynthesis; chorismate biosynthesis; chorismate from D-erythrose 4-phosphate and phosphoenolpyruvate: step 2/7. Its function is as follows. Catalyzes the conversion of 3-deoxy-D-arabino-heptulosonate 7-phosphate (DAHP) to dehydroquinate (DHQ). The protein is 3-dehydroquinate synthase of Crocosphaera subtropica (strain ATCC 51142 / BH68) (Cyanothece sp. (strain ATCC 51142)).